Reading from the N-terminus, the 190-residue chain is Vascular endothelial growth factor A (190 aa).

An N-terminal signal peptide occupies residues methionine 1–alanine 26. 3 disulfide bridges follow: cysteine 51–cysteine 93, cysteine 82–cysteine 127, and cysteine 86–cysteine 129. Residue asparagine 100 is glycosylated (N-linked (GlcNAc...) asparagine).

It belongs to the PDGF/VEGF growth factor family. As to quaternary structure, homodimer; disulfide-linked. Also found as heterodimer with PGF. Interacts with NRP1. Interacts with isoform 2 of BSG. Interacts with CD82; this interaction inhibits VEGFA-mediated signaling pathway.

It localises to the secreted. Growth factor active in angiogenesis, vasculogenesis and endothelial cell growth. Induces endothelial cell proliferation, promotes cell migration, inhibits apoptosis and induces permeabilization of blood vessels. Binds to the FLT1/VEGFR1 and KDR/VEGFR2 receptors, heparan sulfate and heparin. Binding to NRP1 receptor initiates a signaling pathway needed for motor neuron axon guidance and cell body migration, including for the caudal migration of facial motor neurons from rhombomere 4 to rhombomere 6 during embryonic development. Also binds the DEAR/FBXW7-AS1 receptor. This Equus caballus (Horse) protein is Vascular endothelial growth factor A (VEGFA).